The primary structure comprises 311 residues: 4-hydroxyproline 2-epimerase (311 aa).

Cys89 (proton acceptor) is an active-site residue. Substrate is bound by residues 90–91 (GH), His209, and Asp233. Residue Cys237 is the Proton donor of the active site. Residue 238-239 (GT) participates in substrate binding.

This sequence belongs to the proline racemase family.

The enzyme catalyses trans-4-hydroxy-L-proline = cis-4-hydroxy-D-proline. Its function is as follows. Catalyzes the epimerization of trans-4-hydroxy-L-proline (t4LHyp) to cis-4-hydroxy-D-proline (c4DHyp). Is likely involved in a degradation pathway that converts t4LHyp to alpha-ketoglutarate. Displays no proline racemase activity. This is 4-hydroxyproline 2-epimerase from Burkholderia ambifaria (strain ATCC BAA-244 / DSM 16087 / CCUG 44356 / LMG 19182 / AMMD) (Burkholderia cepacia (strain AMMD)).